A 962-amino-acid polypeptide reads, in one-letter code: Replication protein 1a (962 aa).

Positions 71–270 (LQLSKNLCPH…HSWKNIKSFL (200 aa)) constitute an Alphavirus-like MT domain. The interval 79–356 (PHSFAGAMRQ…EEICFRCPKD (278 aa)) is methyltransferase. The segment at 536–561 (DVDERPAGTVSGPTIQAPSVTQENTV) is disordered. Residues 546-561 (SGPTIQAPSVTQENTV) show a composition bias toward polar residues. Residues 667-820 (NKDCVLNNNV…KLSPDSSDQQ (154 aa)) form the (+)RNA virus helicase ATP-binding domain. Residues 693–941 (LMDGVAGCGK…STKCDLFTDK (249 aa)) are ATP-dependent helicase. One can recognise a (+)RNA virus helicase C-terminal domain in the interval 821–962 (IRTFRCPKDV…SRKFRLLFGC (142 aa)).

The protein belongs to the bromoviridae replication protein 1a family. Interacts with RNA-directed RNA polymerase 2a.

It localises to the host endoplasmic reticulum membrane. Involved in the virus replication. Contains a helicase domain and a methyltransferase domain. The methyltransferase domain is probably involved in viral RNA capping. Involved in the formation of ER membrane spherular invaginations in which RNA replication complexes form. The sequence is that of Replication protein 1a from Solanum lycopersicum (Tomato).